The sequence spans 427 residues: MTRSETLFEQAKKTIPGGVNSPVRAFNGVGGTPRFIEKADGAYIYDADGKAYIDYVGSWGPMILGHNHPSIREAVLKAVHNGLSFGAPTELEVIMAEKVIEMVPSMDQVRMVSSGTEATMSAIRLARGYTKRDKILKFEGCYHGHADCLLVKAGSGALTLGQPSSPGIPEDFAKHTLTAVYNDLESVQSFFDQYPEDIACIIIEPVAGNMNCIPPVPGFLEGLRALCDKYGALFIIDEVMTGFRVSRSGAQGHYGVTPDLTTLGKVIGGGMPVGAFGGKKDVMQYLAPAGPVYQAGTLSGNPIAMTAGLAQLDALCADGLYEELAAKTKRIAEGFKAAADKHGIPMAINYVGGMFGFFFTDEQHITRFDQVTRCNMDHFRAFYHGMLDEGVYLAPSAYEAGFLSMAHGDKEIEETLAAADRVLARMK.

Residue K265 is modified to N6-(pyridoxal phosphate)lysine.

Belongs to the class-III pyridoxal-phosphate-dependent aminotransferase family. HemL subfamily. In terms of assembly, homodimer. The cofactor is pyridoxal 5'-phosphate.

It is found in the cytoplasm. It catalyses the reaction (S)-4-amino-5-oxopentanoate = 5-aminolevulinate. It functions in the pathway porphyrin-containing compound metabolism; protoporphyrin-IX biosynthesis; 5-aminolevulinate from L-glutamyl-tRNA(Glu): step 2/2. This Shewanella amazonensis (strain ATCC BAA-1098 / SB2B) protein is Glutamate-1-semialdehyde 2,1-aminomutase.